Here is a 467-residue protein sequence, read N- to C-terminus: Tubulointerstitial nephritis antigen-like (467 aa).

The N-terminal stretch at 1 to 21 (MWRCPLGLLLLLPLAGHLALG) is a signal peptide. One can recognise an SMB domain in the interval 50–98 (EQDLCCRGRADDCALPYLGAICYCDLFCNRTVSDCCPDFWDFCLGVPPP). Disulfide bonds link C54/C73, C71/C73, C71/C85, C77/C84, and C85/C92. N-linked (GlcNAc...) asparagine glycosylation occurs at N78. N-linked (GlcNAc...) asparagine glycosylation is present at N161.

It belongs to the peptidase C1 family. Post-translationally, glycosylated. As to expression, highly expressed in aorta, heart, placenta, kidney and a colorectal adenocarcinoma cell line. Moderately expressed in skeletal muscle, pancreas, lung, lymph nodes, adrenal gland, bone marrow and thyroid. Weakly expressed in colon, small intestine, ovary, spleen, testis and prostate. Predominantly found in vascular smooth muscle cells, but also in cardiac and skeletal muscle cells as well as kidney.

It localises to the secreted. Its function is as follows. May be implicated in the adrenocortical zonation and in mechanisms for repressing the CYP11B1 gene expression in adrenocortical cells. This is a non catalytic peptidase C1 family protein. This chain is Tubulointerstitial nephritis antigen-like (TINAGL1), found in Homo sapiens (Human).